Here is a 237-residue protein sequence, read N- to C-terminus: Cuticlin-like protein 19 (237 aa).

The first 20 residues, 1–20, serve as a signal peptide directing secretion; the sequence is MVEYNRIFCVLVIFSTTIKC.

In terms of assembly, interacts with vps-51 and vps-52. Expression detected in motor neurons.

Its subcellular location is the golgi apparatus. The protein resides in the trans-Golgi network. This chain is Cuticlin-like protein 19 (cutl-19), found in Caenorhabditis elegans.